A 333-amino-acid chain; its full sequence is Uroporphyrinogen decarboxylase (333 aa).

Substrate is bound by residues 21–25 (RQVGR), aspartate 70, tyrosine 139, serine 194, and histidine 309.

It belongs to the uroporphyrinogen decarboxylase family. As to quaternary structure, homodimer.

The protein localises to the cytoplasm. It carries out the reaction uroporphyrinogen III + 4 H(+) = coproporphyrinogen III + 4 CO2. It functions in the pathway porphyrin-containing compound metabolism; protoporphyrin-IX biosynthesis; coproporphyrinogen-III from 5-aminolevulinate: step 4/4. In terms of biological role, catalyzes the decarboxylation of four acetate groups of uroporphyrinogen-III to yield coproporphyrinogen-III. The polypeptide is Uroporphyrinogen decarboxylase (Chlamydia caviae (strain ATCC VR-813 / DSM 19441 / 03DC25 / GPIC) (Chlamydophila caviae)).